The primary structure comprises 354 residues: 3-dehydroquinate synthase (354 aa).

NAD(+) contacts are provided by residues 100–104 (GATGD), 124–125 (TT), K136, K145, and 163–166 (FLKT). Residues E178, H242, and H256 each contribute to the Zn(2+) site.

It belongs to the sugar phosphate cyclases superfamily. Dehydroquinate synthase family. Co(2+) serves as cofactor. The cofactor is Zn(2+). Requires NAD(+) as cofactor.

It is found in the cytoplasm. It catalyses the reaction 7-phospho-2-dehydro-3-deoxy-D-arabino-heptonate = 3-dehydroquinate + phosphate. It functions in the pathway metabolic intermediate biosynthesis; chorismate biosynthesis; chorismate from D-erythrose 4-phosphate and phosphoenolpyruvate: step 2/7. Catalyzes the conversion of 3-deoxy-D-arabino-heptulosonate 7-phosphate (DAHP) to dehydroquinate (DHQ). The sequence is that of 3-dehydroquinate synthase from Staphylococcus aureus (strain NCTC 8325 / PS 47).